Reading from the N-terminus, the 302-residue chain is uncharacterized protein (302 aa).

Glu-48 is a catalytic residue.

Belongs to the PhzF family.

This is an uncharacterized protein from Clostridium acetobutylicum (strain ATCC 824 / DSM 792 / JCM 1419 / IAM 19013 / LMG 5710 / NBRC 13948 / NRRL B-527 / VKM B-1787 / 2291 / W).